The primary structure comprises 2067 residues: Lipoxygenase homology domain-containing protein 1 (2067 aa).

PLAT domains follow at residues Arg43 to Leu160, Asn172 to Leu287, Ile296 to Tyr412, Phe425 to Thr540, Ala553 to Leu673, Phe684 to Tyr803, Val814 to Leu934, Thr969 to Phe1087, Val1100 to Val1225, Val1254 to Tyr1372, Ile1421 to Asp1539, Val1552 to Cys1667, Thr1679 to Ala1797, Thr1810 to Val1931, and Val1948 to Phe2064.

The protein resides in the cell projection. It is found in the stereocilium. Involved in hearing. Required for normal function of hair cells in the inner ear. The chain is Lipoxygenase homology domain-containing protein 1 (LOXHD1) from Homo sapiens (Human).